The chain runs to 172 residues: RNA silencing suppressor p19 (172 aa).

Disordered stretches follow at residues 1-38 (MEGA…ESPG) and 152-172 (VEGN…KESE). 2 stretches are compositionally biased toward basic and acidic residues: residues 9 to 20 (DAREQANSERWD) and 159 to 172 (GRPE…KESE).

It belongs to the tombusvirus protein p19 family. As to quaternary structure, homodimer.

Functionally, viral suppressor of RNA silencing which binds specifically to silencing RNAs (siRNAs). Acts as a molecular caliper to specifically select siRNAs based on the length of the duplex region of the RNA. This Havel river virus (HaRV) protein is RNA silencing suppressor p19.